Reading from the N-terminus, the 374-residue chain is Bifunctional enzyme IspD/IspF (374 aa).

Residues 1–213 (MLDVTLIVLC…PCLKAPSNNF (213 aa)) are 2-C-methyl-D-erythritol 4-phosphate cytidylyltransferase. The tract at residues 214–374 (FTGTGFDIHA…TLKYYNWKKR (161 aa)) is 2-C-methyl-D-erythritol 2,4-cyclodiphosphate synthase. A divalent metal cation is bound by residues D220 and H222. 4-CDP-2-C-methyl-D-erythritol 2-phosphate-binding positions include 220-222 (DIH) and 246-247 (HS). Residue H254 coordinates a divalent metal cation. Residues 268 to 270 (DIG), 273 to 277 (FPDTD), 344 to 347 (TTAE), F351, and R354 contribute to the 4-CDP-2-C-methyl-D-erythritol 2-phosphate site.

The protein in the N-terminal section; belongs to the IspD/TarI cytidylyltransferase family. IspD subfamily. It in the C-terminal section; belongs to the IspF family. A divalent metal cation is required as a cofactor.

It carries out the reaction 2-C-methyl-D-erythritol 4-phosphate + CTP + H(+) = 4-CDP-2-C-methyl-D-erythritol + diphosphate. The catalysed reaction is 4-CDP-2-C-methyl-D-erythritol 2-phosphate = 2-C-methyl-D-erythritol 2,4-cyclic diphosphate + CMP. It functions in the pathway isoprenoid biosynthesis; isopentenyl diphosphate biosynthesis via DXP pathway; isopentenyl diphosphate from 1-deoxy-D-xylulose 5-phosphate: step 2/6. It participates in isoprenoid biosynthesis; isopentenyl diphosphate biosynthesis via DXP pathway; isopentenyl diphosphate from 1-deoxy-D-xylulose 5-phosphate: step 4/6. Its function is as follows. Bifunctional enzyme that catalyzes the formation of 4-diphosphocytidyl-2-C-methyl-D-erythritol from CTP and 2-C-methyl-D-erythritol 4-phosphate (MEP) (IspD), and catalyzes the conversion of 4-diphosphocytidyl-2-C-methyl-D-erythritol 2-phosphate (CDP-ME2P) to 2-C-methyl-D-erythritol 2,4-cyclodiphosphate (ME-CPP) with a corresponding release of cytidine 5-monophosphate (CMP) (IspF). The polypeptide is Bifunctional enzyme IspD/IspF (Aliarcobacter butzleri (strain RM4018) (Arcobacter butzleri)).